The following is a 689-amino-acid chain: Glycine--tRNA ligase beta subunit (689 aa).

It belongs to the class-II aminoacyl-tRNA synthetase family. In terms of assembly, tetramer of two alpha and two beta subunits.

It localises to the cytoplasm. It catalyses the reaction tRNA(Gly) + glycine + ATP = glycyl-tRNA(Gly) + AMP + diphosphate. The polypeptide is Glycine--tRNA ligase beta subunit (Pectobacterium atrosepticum (strain SCRI 1043 / ATCC BAA-672) (Erwinia carotovora subsp. atroseptica)).